A 316-amino-acid polypeptide reads, in one-letter code: MNQLDALKQFTTVVADTGDFKQLAQFQPQDATTNPSLILKAVQQPEYAPLLQDTVARCKGRTMDDIIDRLLVRFGCEILAIIPGRVSTEVDARLSFDTYASITRAERIIDLYQAEGIDIDRVLIKIAATWEGIKAAEKLEQRGIHTNLTLLFSFAQAVACGQARVQLISPFVGRIYDWHKKQAGAHWDEAAAAGANDPGVRSVTQIYNHYKHFGIATEVMGASFRNLGQITALAGCDLLTIAPELLARLVASAAPLQPALDAEAAKGMALPAVNYDEAGWRYALNEDAMATEKLAEGIRAFAADAVKLEQLILASG.

Lysine 125 functions as the Schiff-base intermediate with substrate in the catalytic mechanism.

This sequence belongs to the transaldolase family. Type 1 subfamily. Homodimer.

The protein localises to the cytoplasm. It carries out the reaction D-sedoheptulose 7-phosphate + D-glyceraldehyde 3-phosphate = D-erythrose 4-phosphate + beta-D-fructose 6-phosphate. It functions in the pathway carbohydrate degradation; pentose phosphate pathway; D-glyceraldehyde 3-phosphate and beta-D-fructose 6-phosphate from D-ribose 5-phosphate and D-xylulose 5-phosphate (non-oxidative stage): step 2/3. Its function is as follows. Transaldolase is important for the balance of metabolites in the pentose-phosphate pathway. This Verminephrobacter eiseniae (strain EF01-2) protein is Transaldolase.